The primary structure comprises 965 residues: Vacuolar protein sorting-associated protein 54 (965 aa).

S8 is modified (phosphoserine). The stretch at 228–249 (ELQDYLKKTSQAVKMLRDKIAQ) forms a coiled coil. Residues 516 to 558 (ASAAVDTTSQRNTSPHSEPCSSDSVSEPECTTDSSSSKEQTPA) are disordered. Residues 520–558 (VDTTSQRNTSPHSEPCSSDSVSEPECTTDSSSSKEQTPA) are compositionally biased toward polar residues.

It belongs to the VPS54 family. Component of the Golgi-associated retrograde protein (GARP) complex, also called VFT (VPS fifty-three) complex, composed of VPS51, VPS52, VPS53 and VPS54. EIPR1 interacts with GARP complex and mediates its recruitment to the trans-Golgi network. Interacts with VPS51 in an EIPR1-independent manner. Ubiquitously expressed at low level.

It is found in the golgi apparatus. The protein resides in the trans-Golgi network. The protein localises to the membrane. In terms of biological role, acts as a component of the GARP complex that is involved in retrograde transport from early and late endosomes to the trans-Golgi network (TGN). The GARP complex is required for the maintenance of the cycling of mannose 6-phosphate receptors between the TGN and endosomes, this cycling is necessary for proper lysosomal sorting of acid hydrolases such as CTSD. Within the GARP complex, required to tether the complex to the TGN. Not involved in endocytic recycling. The protein is Vacuolar protein sorting-associated protein 54 (Vps54) of Rattus norvegicus (Rat).